A 367-amino-acid chain; its full sequence is Anthranilate phosphoribosyltransferase (367 aa).

Low complexity predominate over residues 1–17; the sequence is MVLSSEASSAADHSAAA. Positions 1 to 22 are disordered; it reads MVLSSEASSAADHSAAAPIPTS. 5-phospho-alpha-D-ribose 1-diphosphate contacts are provided by residues Gly-104, 107-108, Thr-112, 114-117, 132-140, and Gly-144; these read GD, NLST, and KHGNRAASS. An anthranilate-binding site is contributed by Gly-104. A Mg(2+)-binding site is contributed by Ser-116. Asn-135 provides a ligand contact to anthranilate. Arg-190 contacts anthranilate. Asp-248 and Glu-249 together coordinate Mg(2+).

It belongs to the anthranilate phosphoribosyltransferase family. As to quaternary structure, homodimer. Mg(2+) serves as cofactor.

The catalysed reaction is N-(5-phospho-beta-D-ribosyl)anthranilate + diphosphate = 5-phospho-alpha-D-ribose 1-diphosphate + anthranilate. It functions in the pathway amino-acid biosynthesis; L-tryptophan biosynthesis; L-tryptophan from chorismate: step 2/5. Its function is as follows. Catalyzes the transfer of the phosphoribosyl group of 5-phosphorylribose-1-pyrophosphate (PRPP) to anthranilate to yield N-(5'-phosphoribosyl)-anthranilate (PRA). In Mycobacterium marinum (strain ATCC BAA-535 / M), this protein is Anthranilate phosphoribosyltransferase.